A 498-amino-acid polypeptide reads, in one-letter code: Glycerol kinase (498 aa).

T12 is an ADP binding site. Positions 12, 13, and 14 each coordinate ATP. T12 serves as a coordination point for sn-glycerol 3-phosphate. An ADP-binding site is contributed by R16. Sn-glycerol 3-phosphate is bound by residues R82, E83, and Y134. Glycerol contacts are provided by R82, E83, and Y134. Position 230 is a phosphohistidine; by HPr (H230). D244 contributes to the sn-glycerol 3-phosphate binding site. Positions 244 and 245 each coordinate glycerol. 2 residues coordinate ADP: T266 and G309. ATP is bound by residues T266, G309, Q313, and G410. ADP-binding residues include G410 and N414.

This sequence belongs to the FGGY kinase family. As to quaternary structure, homotetramer and homodimer (in equilibrium). Post-translationally, the phosphoenolpyruvate-dependent sugar phosphotransferase system (PTS), including enzyme I, and histidine-containing protein (HPr) are required for the phosphorylation, which leads to the activation of the enzyme.

The catalysed reaction is glycerol + ATP = sn-glycerol 3-phosphate + ADP + H(+). It participates in polyol metabolism; glycerol degradation via glycerol kinase pathway; sn-glycerol 3-phosphate from glycerol: step 1/1. Activated by phosphorylation and inhibited by fructose 1,6-bisphosphate (FBP). Its function is as follows. Key enzyme in the regulation of glycerol uptake and metabolism. Catalyzes the phosphorylation of glycerol to yield sn-glycerol 3-phosphate. The polypeptide is Glycerol kinase (Staphylococcus aureus (strain bovine RF122 / ET3-1)).